A 281-amino-acid chain; its full sequence is Putative thiosulfate sulfurtransferase (281 aa).

Rhodanese domains lie at 18–125 and 154–274; these read NTDG…ELTK and AIGN…VPIE. Cys233 serves as the catalytic Cysteine persulfide intermediate. Residue Arg238 participates in substrate binding.

The catalysed reaction is thiosulfate + hydrogen cyanide = thiocyanate + sulfite + 2 H(+). In terms of biological role, may be a sulfotransferase involved in the formation of thiosulfate. The protein is Putative thiosulfate sulfurtransferase (cysA) of Saccharopolyspora erythraea (Streptomyces erythraeus).